We begin with the raw amino-acid sequence, 473 residues long: Ribosomal protein uS12 methylthiotransferase RimO (473 aa).

Residues 30-141 (ASVAVLHLGC…IVQIIERVER (112 aa)) enclose the MTTase N-terminal domain. Positions 39, 75, 104, 179, 183, and 186 each coordinate [4Fe-4S] cluster. The Radical SAM core domain occupies 165–394 (TTHAPVAYLR…MQVQQGITFR (230 aa)). The TRAM domain occupies 397-463 (REQVGRVVPV…PYDLFGQVVA (67 aa)).

The protein belongs to the methylthiotransferase family. RimO subfamily. [4Fe-4S] cluster serves as cofactor.

Its subcellular location is the cytoplasm. The catalysed reaction is L-aspartate(89)-[ribosomal protein uS12]-hydrogen + (sulfur carrier)-SH + AH2 + 2 S-adenosyl-L-methionine = 3-methylsulfanyl-L-aspartate(89)-[ribosomal protein uS12]-hydrogen + (sulfur carrier)-H + 5'-deoxyadenosine + L-methionine + A + S-adenosyl-L-homocysteine + 2 H(+). Catalyzes the methylthiolation of an aspartic acid residue of ribosomal protein uS12. This is Ribosomal protein uS12 methylthiotransferase RimO from Synechococcus sp. (strain JA-2-3B'a(2-13)) (Cyanobacteria bacterium Yellowstone B-Prime).